The sequence spans 356 residues: Acyl-coenzyme A diphosphatase NUDT19 (356 aa).

The Nudix hydrolase domain occupies 10–241 (AATVMLAAGW…IWLAPPQFYE (232 aa)). Residues 72 to 94 (PRFGLGPEPPRQPPFPGLSHGDA) are disordered. Residues 78-87 (PEPPRQPPFP) are compositionally biased toward pro residues. The short motif at 97–118 (AALPDDVALRICAIRETFEEAG) is the Nudix box element. 2 residues coordinate Mg(2+): E112 and E116. Residue K299 is modified to N6-succinyllysine. The Microbody targeting signal motif lies at 354-356 (ARL).

It belongs to the Nudix hydrolase family. In terms of assembly, monomer. The cofactor is Mg(2+). Mn(2+) serves as cofactor.

The protein localises to the peroxisome. The catalysed reaction is an acyl-CoA + H2O = an acyl-4'-phosphopantetheine + adenosine 3',5'-bisphosphate + 2 H(+). It carries out the reaction CoA + H2O = (R)-4'-phosphopantetheine + adenosine 3',5'-bisphosphate + 2 H(+). It catalyses the reaction hexanoyl-CoA + H2O = hexanoyl-4'-phosphopantetheine + adenosine 3',5'-bisphosphate + 2 H(+). The enzyme catalyses octanoyl-CoA + H2O = S-octanoyl-4'-phosphopantetheine + adenosine 3',5'-bisphosphate + 2 H(+). The catalysed reaction is butanoyl-CoA + H2O = S-butanoyl-4'-phosphopantetheine + adenosine 3',5'-bisphosphate + 2 H(+). It carries out the reaction propanoyl-CoA + H2O = propanoyl-4'-phosphopantetheine + adenosine 3',5'-bisphosphate + 2 H(+). It catalyses the reaction malonyl-CoA + H2O = malonyl-4'-phosphopantetheine + adenosine 3',5'-bisphosphate + 2 H(+). The enzyme catalyses succinyl-CoA + H2O = succinyl-4'-phosphopantetheine + adenosine 3',5'-bisphosphate + 2 H(+). The catalysed reaction is choloyl-CoA + H2O = S-choloyl-4'-phosphopantetheine + adenosine 3',5'-bisphosphate + 2 H(+). It carries out the reaction 4,8-dimethylnonanoyl-CoA + H2O = S-(4,8-dimethylnonanoyl)-4'-phosphopantetheine + adenosine 3',5'-bisphosphate + 2 H(+). It catalyses the reaction (9Z,12Z,15Z)-octadecatrienoyl-CoA + H2O = S-(9Z,12Z,15Z-octadecatrienoyl)-4'-phosphopantetheine + adenosine 3',5'-bisphosphate + 2 H(+). The enzyme catalyses (9Z,12Z)-octadecadienoyl-CoA + H2O = S-(9Z,12Z-octadecadienoyl)-4'-phosphopantetheine + adenosine 3',5'-bisphosphate + 2 H(+). The catalysed reaction is (9Z)-hexadecenoyl-CoA + H2O = S-(9Z-hexadecenoyl)-4'-phosphopantetheine + adenosine 3',5'-bisphosphate + 2 H(+). It carries out the reaction (9Z)-tetradecenoyl-CoA + H2O = S-(9Z-tetradecenoyl)-4'-phosphopantetheine + adenosine 3',5'-bisphosphate + 2 H(+). It catalyses the reaction (6Z)-octenoyl-CoA + H2O = S-(6Z-octenoyl)-4'-phosphopantetheine + adenosine 3',5'-bisphosphate + 2 H(+). The enzyme catalyses hexadecanoyl-CoA + H2O = S-hexadecanoyl-4'-phosphopantetheine + adenosine 3',5'-bisphosphate + 2 H(+). The catalysed reaction is tetradecanoyl-CoA + H2O = tetradecanoyl-4'-phosphopantetheine + adenosine 3',5'-bisphosphate + 2 H(+). It carries out the reaction dodecanoyl-CoA + H2O = S-dodecanoyl-4'-phosphopantetheine + adenosine 3',5'-bisphosphate + 2 H(+). It catalyses the reaction a 5'-end CoA-ribonucleoside in mRNA + H2O = a 5'-end phospho-adenosine-phospho-ribonucleoside in mRNA + (R)-4'-phosphopantetheine + 2 H(+). Its function is as follows. Fatty acyl-coenzyme A (CoA) diphosphatase that hydrolyzes fatty acyl-CoA to yield acyl-4'-phosphopantetheine and adenosine 3',5'-bisphosphate. Mediates the hydrolysis of a wide range of CoA esters, including choloyl-CoA and branched-chain fatty-acyl-CoA esters and at low substrate concentrations medium and long-chain fatty-acyl-CoA esters are the primary substrates. Highest activity seen with medium-chain acyl-CoA esters and higher rates of activity seen with the unsaturated acyl-CoA esters compared with the saturated esters. Exhibits decapping activity towards dpCoA-capped RNAs in vitro. This chain is Acyl-coenzyme A diphosphatase NUDT19 (Nudt19), found in Mus saxicola (Brown spiny mouse).